Here is a 672-residue protein sequence, read N- to C-terminus: Glycine--tRNA ligase beta subunit (672 aa).

It belongs to the class-II aminoacyl-tRNA synthetase family. As to quaternary structure, tetramer of two alpha and two beta subunits.

The protein localises to the cytoplasm. It catalyses the reaction tRNA(Gly) + glycine + ATP = glycyl-tRNA(Gly) + AMP + diphosphate. The sequence is that of Glycine--tRNA ligase beta subunit from Thermotoga sp. (strain RQ2).